The sequence spans 426 residues: MDTIEIPALNRPVDATVEIPGSKSLTNRALLVAALAQGDSILENALFSEDSEYFAKCLEQLGIPITLNPHLAQIQLAGRGGEIPAKQADLFVGLSGTTARFISALVALGNGEYRLDGVPRMRERPMGDMLTVLETGGATVNFEGNSGFMPYTVYSQGFAGGNFCLKANQTSQQLSALLMIAPYAQQDTIFEVEGTLVSLSYIKMTCRLMADFGVEVIQIGDNQFQIKAGQRYQAQHYTVEPDASNASYFFAAAAVTGGRVRVKHLTKQSCQGDILWLNVLEQMGCQIKDSDDYTEVTGPKQLQGIDIDMNDISDLVQTLAAIAPFASSPITIRNVEHIRYKETDRIKAVVTELRRLGVQVEEFPDRLKIEPGPITPAEIETYHDHRMAMAFAVTGLKVPGIVIKDPGCTAKTFPDYFTRFFQMLEQ.

Residues Lys-23, Ser-24, and Arg-28 each contribute to the 3-phosphoshikimate site. Lys-23 is a binding site for phosphoenolpyruvate. The phosphoenolpyruvate site is built by Gly-96 and Arg-124. The 3-phosphoshikimate site is built by Thr-170, Ser-171, Gln-172, Ser-198, Asp-314, and Lys-341. Gln-172 contributes to the phosphoenolpyruvate binding site. Asp-314 (proton acceptor) is an active-site residue. Phosphoenolpyruvate-binding residues include Arg-345, Arg-386, and Lys-411.

This sequence belongs to the EPSP synthase family. As to quaternary structure, monomer.

Its subcellular location is the cytoplasm. The catalysed reaction is 3-phosphoshikimate + phosphoenolpyruvate = 5-O-(1-carboxyvinyl)-3-phosphoshikimate + phosphate. It participates in metabolic intermediate biosynthesis; chorismate biosynthesis; chorismate from D-erythrose 4-phosphate and phosphoenolpyruvate: step 6/7. Functionally, catalyzes the transfer of the enolpyruvyl moiety of phosphoenolpyruvate (PEP) to the 5-hydroxyl of shikimate-3-phosphate (S3P) to produce enolpyruvyl shikimate-3-phosphate and inorganic phosphate. In Nostoc punctiforme (strain ATCC 29133 / PCC 73102), this protein is 3-phosphoshikimate 1-carboxyvinyltransferase.